A 336-amino-acid chain; its full sequence is DNA repair protein Rad51 homolog (336 aa).

The segment covering 1–10 (MEKLTNVQAQ) has biased composition (polar residues). Residues 1-20 (MEKLTNVQAQQEEEEEEGPL) form a disordered region. 124–131 (GEFRCGKT) contributes to the ATP binding site.

Belongs to the RecA family. RAD51 subfamily. As to quaternary structure, interacts with Rrp6; the interaction is required for the recruitment of spn-A to the DNA-damage response foci. In terms of tissue distribution, highly expressed in ovaries.

It is found in the nucleus. Its subcellular location is the cytoplasm. In terms of biological role, plays an important role in homologous strand exchange, a key step in DNA repair through homologous recombination (HR). Binds to single and double-stranded DNA and exhibits DNA-dependent ATPase activity. Underwinds duplex DNA. Spindle genes are required for each of the symmetry-breaking steps that generate polarity during egg axis formation; oocyte positioning at the posterior of the cyst to generate the first AP polarity and inhibition of gurken (grk) signaling to the follicle cell layer to polarize first the AP axis and then DV axis. May have a role in female meiosis. This Drosophila melanogaster (Fruit fly) protein is DNA repair protein Rad51 homolog (spn-A).